The sequence spans 446 residues: Probable tRNA modification GTPase MnmE (446 aa).

R28, E87, and R126 together coordinate (6S)-5-formyl-5,6,7,8-tetrahydrofolate. A TrmE-type G domain is found at 218 to 373 (GIQVALLGPA…LKQLIWQQAT (156 aa)). Position 228 (N228) interacts with K(+). Residues 228 to 233 (NAGKST), 247 to 253 (TPIAGTT), and 272 to 275 (DTAG) contribute to the GTP site. S232 is a Mg(2+) binding site. T247, I249, and T252 together coordinate K(+). T253 contacts Mg(2+). K446 lines the (6S)-5-formyl-5,6,7,8-tetrahydrofolate pocket.

Belongs to the TRAFAC class TrmE-Era-EngA-EngB-Septin-like GTPase superfamily. TrmE GTPase family. K(+) is required as a cofactor.

The protein localises to the plastid. Its subcellular location is the chloroplast. In terms of biological role, exhibits a very high intrinsic GTPase hydrolysis rate. Involved in the addition of a carboxymethylaminomethyl (cmnm) group at the wobble position (U34) of certain tRNAs, forming tRNA-cmnm(5)s(2)U34. The protein is Probable tRNA modification GTPase MnmE of Cyanidioschyzon merolae (strain NIES-3377 / 10D) (Unicellular red alga).